A 1288-amino-acid chain; its full sequence is 5-oxoprolinase (1288 aa).

Residue T151 is modified to Phosphothreonine. The disordered stretch occupies residues 1249–1269; sequence GGGGYGDPEDPAPLPGSPLQP. Position 1265 is a phosphoserine (S1265).

This sequence belongs to the oxoprolinase family. In terms of assembly, homodimer. As to expression, expressed in coronary artery and kidney.

Its subcellular location is the cytoplasm. It localises to the cytosol. The catalysed reaction is 5-oxo-L-proline + ATP + 2 H2O = L-glutamate + ADP + phosphate + H(+). In terms of biological role, catalyzes the cleavage of 5-oxo-L-proline to form L-glutamate coupled to the hydrolysis of ATP to ADP and inorganic phosphate. The polypeptide is 5-oxoprolinase (OPLAH) (Bos taurus (Bovine)).